Reading from the N-terminus, the 217-residue chain is RNA chaperone ProQ (217 aa).

Residues 105 to 166 (EAKARVQAQR…PREEQHTPVS (62 aa)) form a disordered region. The span at 121–131 (KRERKPRPTTP) shows a compositional bias: basic residues. Residues 132–162 (RRKEGAERKPRAQKPVEKAPKTVKAPREEQH) are compositionally biased toward basic and acidic residues.

It belongs to the ProQ family.

The protein resides in the cytoplasm. RNA chaperone with significant RNA binding, RNA strand exchange and RNA duplexing activities. May regulate ProP activity through an RNA-based, post-transcriptional mechanism. This chain is RNA chaperone ProQ, found in Escherichia coli O8 (strain IAI1).